Here is a 62-residue protein sequence, read N- to C-terminus: ATP synthase subunit J, mitochondrial (62 aa).

Residues Ile13–Ala32 traverse the membrane as a helical segment.

As to quaternary structure, F-type ATP synthases have 2 components, the catalytic core F(1) and the membrane-embedded component F(0), linked together by a central stalk and a peripheral stalk. The central stalk, also called rotor shaft, is often seen as part of F(1). The peripheral stalk is seen as part of F(0). F(0) contains the membrane channel next to the rotor. F-type ATP synthases form dimers but each monomer functions independently in ATP generation. The dimer consists of 17 different polypeptides: ATP1 (subunit alpha, 3 molecules per monomer, part of F(1)), ATP2 (subunit beta, 3 copies per monomer, part of F(1)), ATP3 (subunit gamma, part of the central stalk), ATP4 (subunit b, part of the peripheral stalk), ATP5/OSCP (subunit 5/OSCP, part of the peripheral stalk), ATP6 (subunit a, part of the peripheral stalk), ATP7 (subunit d, part of the peripheral stalk), ATP8 (subunit 8, part of the peripheral stalk), OLI1 (subunit c, part of the rotor, 10 molecules per monomer), ATP14 (subunit h, part of the peripheral stalk), ATP15 (subunit epsilon, part of the central stalk), ATP16 (subunit delta, part of the central stalk), ATP17 (subunit f, part of the peripheral stalk), ATP18 (subunit i/j, part of the peripheral stalk), ATP19 (subunit k, dimer-specific, at interface between monomers), ATP20 (subunit g, at interface between monomers), TIM11 (subunit e, at interface between monomers).

Its subcellular location is the mitochondrion inner membrane. In terms of biological role, mitochondrial membrane ATP synthase (F(1)F(0) ATP synthase or Complex V) produces ATP from ADP in the presence of a proton gradient across the membrane which is generated by electron transport complexes of the respiratory chain. F-type ATP synthases consist of two structural domains, F(1) - containing the extramembraneous catalytic core, and F(0) - containing the membrane proton channel, linked together by a central stalk and a peripheral stalk. During catalysis, ATP synthesis in the catalytic domain of F(1) is coupled via a rotary mechanism of the central stalk subunits to proton translocation. Part of the complex F(0) domain. Minor subunit located with subunit a/ATP6 in the membrane. In Yarrowia lipolytica (strain CLIB 122 / E 150) (Yeast), this protein is ATP synthase subunit J, mitochondrial.